We begin with the raw amino-acid sequence, 538 residues long: Fructooligosaccharide ABC transporter substrate-binding protein FusA (538 aa).

The first 22 residues, 1–22 (MKFKTFSKSAVLLTASLAVLAA), serve as a signal peptide directing secretion. A lipid anchor (N-palmitoyl cysteine) is attached at C23. A lipid anchor (S-diacylglycerol cysteine) is attached at C23. E167 is a substrate binding site. The Ca(2+) site is built by D215, N217, N219, E221, D223, and E224. N235 provides a ligand contact to substrate. Residues D263, F264, D267, and N268 each contribute to the Ca(2+) site. Substrate is bound by residues W314, N318, K353, W384, R419, and E423.

It belongs to the bacterial solute-binding protein 1 family. In terms of assembly, the complex is composed of two ATP-binding proteins (MsmK), two transmembrane proteins (FusB and FusC) and a solute-binding protein (FusA).

The protein localises to the cell membrane. Part of the ABC transporter complex FusABC-MsmK involved in short- and long-chain fructooligosaccharide (FOS) import. Required for the utilization of long-chain FOSs. Binds kestose, nystose, fructofuranosyl-nystose and inulin, but not sucrose. Has a preference for long-chain FOSs (tetrasaccharides and larger). The protein is Fructooligosaccharide ABC transporter substrate-binding protein FusA of Streptococcus pneumoniae serotype 4 (strain ATCC BAA-334 / TIGR4).